Reading from the N-terminus, the 383-residue chain is MIVSSTTDFREAARRRLPRFLFDYIDGGAYAERTMARNIDDLADIALRQRVLMDVSVVDPSTTLFGVRQALPVALAPVGLTGMYARRGECQAARAAAAKGVPFCLSTVSVCDVDEVRAASATPFWFQLYVLRDRGFMRDLLARASAAGATTLVFTVDMPVPGARYRDAHSGMSGPNAAARRLVQAALKPAWAWDVGVMGHPHRLGNVAPALGKASGLQDFMGWLAANFDPSIQWSDLKWIRDAWKGPLVIKGVLDPEDAKAAADIGADGVVVSNHGGRQLDGVLSSARALPAIADAVGDRLTVLADGGVRSGLDVVRMLALGARGVLIGRAYAYALAARGEAGVTQLLDLIDKEMRVAMALTGVRDVASINETILAERVPRAG.

Residues 1-380 enclose the FMN hydroxy acid dehydrogenase domain; it reads MIVSSTTDFR…NETILAERVP (380 aa). Position 24 (Tyr-24) interacts with substrate. FMN-binding residues include Ser-106 and Gln-127. Tyr-129 contacts substrate. Thr-155 provides a ligand contact to FMN. Residue Arg-164 participates in substrate binding. Lys-251 contributes to the FMN binding site. Residue His-275 is the Proton acceptor of the active site. Arg-278 serves as a coordination point for substrate. FMN is bound at residue 306-330; sequence DGGVRSGLDVVRMLALGARGVLIGR.

This sequence belongs to the FMN-dependent alpha-hydroxy acid dehydrogenase family. The cofactor is FMN.

It is found in the cell inner membrane. It catalyses the reaction (S)-lactate + A = pyruvate + AH2. Its function is as follows. Catalyzes the conversion of L-lactate to pyruvate. Is coupled to the respiratory chain. The chain is L-lactate dehydrogenase from Caulobacter vibrioides (strain ATCC 19089 / CIP 103742 / CB 15) (Caulobacter crescentus).